Reading from the N-terminus, the 715-residue chain is Protein DOA1 (715 aa).

7 WD repeats span residues 11-40 (GHDQ…RLWS), 53-82 (GQGF…NGVP), 97-125 (GHQG…KVWK), 135-166 (AHNA…KLWQ), 177-206 (IHND…KLVD), 218-247 (GHES…RIWS), and 259-288 (LPAI…RIFS). S332 is subject to Phosphoserine. Positions 352-449 (AHQFSNSSWK…NGISLDQPND (98 aa)) constitute a PFU domain. Residues 434 to 440 (FILKNTN) form an interaction with HSE1 region. The PUL domain occupies 465–715 (KVLPVKQYLI…RFKDIFDDLS (251 aa)). ARM repeat units follow at residues 478–512 (YNPD…LHDI), 513–543 (DESW…VRLI), 544–582 (VKKL…CFNN), 583–635 (ENWG…LVTK), 636–680 (GNSD…LATV), and 681–715 (EPTL…DDLS).

The protein belongs to the WD repeat PLAP family. Forms a complex composed of CDC48, NPL4, UFD1, DOA1, SHP1 and deubiquitinase OTU1; within the complex interacts with CDC48. Interacts (via PUL domain) with CDC48 (via C-terminus); the interaction is direct. Forms a complex composed of CDC48, DOA1, deubiquitinase UBP3 and probably BRE5; within the complex interacts with CDC48 and UBP3. May form a complex composed of VPS27, HSE1 and DOA1. Interacts with HSE1 (via SH3 domain). Interacts (via WD repeats and PFU domain) with ubiquitin; the interaction is direct. Interacts with ubiquitinated FZO1 but not unmodified FZO1; the interaction recruits FZO1 to CDC48 and promotes FZO1 proteasomal degradation.

The protein localises to the nucleus. It localises to the cytoplasm. Its subcellular location is the mitochondrion outer membrane. The protein resides in the endosome membrane. Functionally, ubiquitin-binding protein involved in protein ubiquitination, sorting and degradation. Acts as a ubiquitinated substrate-recruiting adapter for chaperone ATPase CDC48 by binding mono- or polyubiquitin chains. Depending on the context, promotes or prevents proteasomal degradation of ubiquitinated proteins. Involved in the ubiquitin fusion degradation (UFD) pathway by promoting the degradation of ubiquitinated proteins. Involved in the mitochondria-associated degradation pathway (MAD) by promoting the degradation of several ubiquitinated membrane proteins. By competing with UFD2 to bind CDC48, prevents the multi-ubiquitination and subsequent degradation of UFD2-dependent substrates. Required for ribophagy, a process which relocalizes ribosomal particles into the vacuole for degradation in response to starvation. Involved in the ubiquitin-mediated sorting of membrane proteins into multivesicular bodies (MVBs). In addition, plays an essential role in maintaining cellular ubiquitin levels. May affect indirectly the degradation of ubiquitinylated proteins by regulating cellular ubiquitin levels. This Saccharomyces cerevisiae (strain ATCC 204508 / S288c) (Baker's yeast) protein is Protein DOA1.